A 358-amino-acid polypeptide reads, in one-letter code: DNA replication and repair protein RecF (358 aa).

30-37 (GNNGSGKT) provides a ligand contact to ATP.

It belongs to the RecF family.

The protein localises to the cytoplasm. In terms of biological role, the RecF protein is involved in DNA metabolism; it is required for DNA replication and normal SOS inducibility. RecF binds preferentially to single-stranded, linear DNA. It also seems to bind ATP. This is DNA replication and repair protein RecF from Actinobacillus succinogenes (strain ATCC 55618 / DSM 22257 / CCUG 43843 / 130Z).